We begin with the raw amino-acid sequence, 344 residues long: Biotin synthase (344 aa).

Positions 40 to 267 (AEVQVSTLLS…KSMVRLSAGR (228 aa)) constitute a Radical SAM core domain. 3 residues coordinate [4Fe-4S] cluster: Cys-55, Cys-59, and Cys-62. [2Fe-2S] cluster contacts are provided by Cys-99, Cys-130, Cys-190, and Arg-262.

This sequence belongs to the radical SAM superfamily. Biotin synthase family. In terms of assembly, homodimer. [4Fe-4S] cluster is required as a cofactor. Requires [2Fe-2S] cluster as cofactor.

It catalyses the reaction (4R,5S)-dethiobiotin + (sulfur carrier)-SH + 2 reduced [2Fe-2S]-[ferredoxin] + 2 S-adenosyl-L-methionine = (sulfur carrier)-H + biotin + 2 5'-deoxyadenosine + 2 L-methionine + 2 oxidized [2Fe-2S]-[ferredoxin]. It functions in the pathway cofactor biosynthesis; biotin biosynthesis; biotin from 7,8-diaminononanoate: step 2/2. Functionally, catalyzes the conversion of dethiobiotin (DTB) to biotin by the insertion of a sulfur atom into dethiobiotin via a radical-based mechanism. The protein is Biotin synthase of Xanthomonas campestris pv. campestris (strain 8004).